We begin with the raw amino-acid sequence, 500 residues long: Small ribosomal subunit protein uS3m (500 aa).

It belongs to the universal ribosomal protein uS3 family.

Its subcellular location is the mitochondrion. The polypeptide is Small ribosomal subunit protein uS3m (RPS3) (Prototheca wickerhamii).